The primary structure comprises 563 residues: Dicarboxylate transporter 2.1, chloroplastic (563 aa).

Residues 1 to 68 constitute a chloroplast transit peptide; sequence MESFALHSLS…LKPIPRFSTR (68 aa). 2 disordered regions span residues 16–45 and 71–92; these read TLLS…STIS and AAPQ…PSPQ. The segment covering 28–45 has biased composition (low complexity); the sequence is RLSLLRRTSSRSPPSTIS. Residues 76-90 are compositionally biased toward pro residues; sequence NAPPPPPPSPSPSPS. 12 helical membrane passes run 96–116, 134–154, 165–185, 234–254, 261–281, 308–328, 358–378, 379–399, 414–434, 450–470, 483–503, and 537–557; these read LIPL…VPVP, IAGL…GLTA, AAFS…FFFA, AGGI…SKPN, LGSY…ALFL, WFKA…LILY, NEWI…CGET, LGIP…VLGV, TLAW…LGVV, LSWP…HYLF, AFLA…LALA, and IGFV…TFWW.

Belongs to the SLC13A/DASS transporter (TC 2.A.47) family. DIT1 subfamily. As to expression, expressed in roots, rosette and cauline leaves, stems, flowers and siliques.

Its subcellular location is the plastid. It is found in the chloroplast inner membrane. In terms of biological role, glutamate/malate translocator involved with DIT1 in primary ammonia assimilation and in the re-assimilation of ammonia generated by the photorespiratory pathway. Exports the end product of ammonia assimilation, glutamate, from plastids to the cytosol. The precursor for ammonia assimilation, 2-oxoglutarate, is imported from the cytosol by DIT1. The chain is Dicarboxylate transporter 2.1, chloroplastic (DIT2-1) from Arabidopsis thaliana (Mouse-ear cress).